The chain runs to 36 residues: Photosystem I reaction center subunit VIII (36 aa).

The helical transmembrane segment at 6–28 threads the bilayer; the sequence is LPSIFVPLIGLFFPAIAMASLFL.

This sequence belongs to the PsaI family.

It is found in the plastid. The protein localises to the chloroplast thylakoid membrane. May help in the organization of the PsaL subunit. In Amborella trichopoda, this protein is Photosystem I reaction center subunit VIII.